A 126-amino-acid chain; its full sequence is Aspartate 1-decarboxylase (126 aa).

The active-site Schiff-base intermediate with substrate; via pyruvic acid is serine 25. The residue at position 25 (serine 25) is a Pyruvic acid (Ser). Residue threonine 57 coordinates substrate. The active-site Proton donor is tyrosine 58. 72–74 (GAT) lines the substrate pocket.

The protein belongs to the PanD family. As to quaternary structure, heterooctamer of four alpha and four beta subunits. Requires pyruvate as cofactor. In terms of processing, is synthesized initially as an inactive proenzyme, which is activated by self-cleavage at a specific serine bond to produce a beta-subunit with a hydroxyl group at its C-terminus and an alpha-subunit with a pyruvoyl group at its N-terminus.

It localises to the cytoplasm. It carries out the reaction L-aspartate + H(+) = beta-alanine + CO2. Its pathway is cofactor biosynthesis; (R)-pantothenate biosynthesis; beta-alanine from L-aspartate: step 1/1. Catalyzes the pyruvoyl-dependent decarboxylation of aspartate to produce beta-alanine. The polypeptide is Aspartate 1-decarboxylase (Campylobacter jejuni subsp. doylei (strain ATCC BAA-1458 / RM4099 / 269.97)).